The following is a 632-amino-acid chain: Chaperone protein HtpG (632 aa).

Positions 1–339 (MTQQTMSFQA…SSDLPLNVSR (339 aa)) are a; substrate-binding. The interval 340–559 (EILQESRDVK…DNDMSGYLQR (220 aa)) is b. The tract at residues 560–632 (MLKAAGQSAP…TNALLLSRAA (73 aa)) is c.

This sequence belongs to the heat shock protein 90 family. Homodimer.

The protein localises to the cytoplasm. Functionally, molecular chaperone. Has ATPase activity. The chain is Chaperone protein HtpG from Burkholderia pseudomallei (strain 668).